The primary structure comprises 449 residues: Bifunctional protein GlmU (449 aa).

Residues 1–225 form a pyrophosphorylase region; sequence MLSVAILAAG…NGELQGINNR (225 aa). UDP-N-acetyl-alpha-D-glucosamine contacts are provided by residues 7–10, lysine 21, glutamine 73, and 78–79; these read LAAG and GT. Residue aspartate 103 participates in Mg(2+) binding. 4 residues coordinate UDP-N-acetyl-alpha-D-glucosamine: glycine 140, glutamate 154, asparagine 169, and asparagine 223. A Mg(2+)-binding site is contributed by asparagine 223. The segment at 226-246 is linker; that stretch reads IHLSECEECIQNSIKEKHMLN. Residues 247-449 form an N-acetyltransferase region; it reads GVTFINKASC…NIENWKKKKS (203 aa). UDP-N-acetyl-alpha-D-glucosamine contacts are provided by arginine 328 and lysine 346. Histidine 358 serves as the catalytic Proton acceptor. Residues tyrosine 361 and asparagine 372 each contribute to the UDP-N-acetyl-alpha-D-glucosamine site. Residues alanine 375, alanine 418, and arginine 435 each coordinate acetyl-CoA.

The protein in the N-terminal section; belongs to the N-acetylglucosamine-1-phosphate uridyltransferase family. This sequence in the C-terminal section; belongs to the transferase hexapeptide repeat family. As to quaternary structure, homotrimer. Requires Mg(2+) as cofactor.

The protein localises to the cytoplasm. It catalyses the reaction alpha-D-glucosamine 1-phosphate + acetyl-CoA = N-acetyl-alpha-D-glucosamine 1-phosphate + CoA + H(+). It carries out the reaction N-acetyl-alpha-D-glucosamine 1-phosphate + UTP + H(+) = UDP-N-acetyl-alpha-D-glucosamine + diphosphate. The protein operates within nucleotide-sugar biosynthesis; UDP-N-acetyl-alpha-D-glucosamine biosynthesis; N-acetyl-alpha-D-glucosamine 1-phosphate from alpha-D-glucosamine 6-phosphate (route II): step 2/2. Its pathway is nucleotide-sugar biosynthesis; UDP-N-acetyl-alpha-D-glucosamine biosynthesis; UDP-N-acetyl-alpha-D-glucosamine from N-acetyl-alpha-D-glucosamine 1-phosphate: step 1/1. It participates in bacterial outer membrane biogenesis; LPS lipid A biosynthesis. Functionally, catalyzes the last two sequential reactions in the de novo biosynthetic pathway for UDP-N-acetylglucosamine (UDP-GlcNAc). The C-terminal domain catalyzes the transfer of acetyl group from acetyl coenzyme A to glucosamine-1-phosphate (GlcN-1-P) to produce N-acetylglucosamine-1-phosphate (GlcNAc-1-P), which is converted into UDP-GlcNAc by the transfer of uridine 5-monophosphate (from uridine 5-triphosphate), a reaction catalyzed by the N-terminal domain. The protein is Bifunctional protein GlmU of Prochlorococcus marinus (strain AS9601).